A 202-amino-acid chain; its full sequence is Probable pathogenesis-related protein CaO19.2336 (202 aa).

The first 20 residues, 1–20, serve as a signal peptide directing secretion; sequence MKTLLFIYLQLLLLLSIIIG. N-linked (GlcNAc...) asparagine glycosylation is found at Asn58 and Asn152. Residues 66 to 179 enclose the SCP domain; sequence LKEHNNKRKL…LNALYIVCSY (114 aa).

It belongs to the CRISP family.

It is found in the secreted. Secreted protein that acts as a virulence factor during infections. The polypeptide is Probable pathogenesis-related protein CaO19.2336 (Candida albicans (strain SC5314 / ATCC MYA-2876) (Yeast)).